Reading from the N-terminus, the 377-residue chain is MEKLKSFRHLNNNIDLILNEENSTEILGAQAHIWNQIFNFINSMSLKCAIQLGIPDIINNHGKPMTISQLTLALPINRKKSPCVYRLMRILIHSGFFALQKAEVGEEGGGEEEGYVITDASKLLLKDNPMSVTPFLLAMLDPVMTKPWDFLSNWFQNGDPTPFDTANGMAFWDYGSHEPKLARFFNDAMASDARLVTSVVIEKCKGVFEGVESLVDVGGGTGTVASSIAAAFPHIQCTVFDLPHVVADLQGGNNLNFVGGDMFVDVPATEVVLLKWILHDWNDEESVKILKKCKEAISKSNKKGGKVIIIDMKVENEKDEDDESYETQLFFDMLMMALVTGRERNEKEWAKLFKDAGFSNYKITPILGLRSLIEVYP.

S-adenosyl-L-methionine is bound at residue Asp241. His279 serves as the catalytic Proton acceptor.

This sequence belongs to the class I-like SAM-binding methyltransferase superfamily. Cation-independent O-methyltransferase family. Highly expressed in lupulin glands. Detected in early-, mid- and late-stage cones.

The sequence is that of Probable O-methyltransferase 3 from Humulus lupulus (European hop).